A 532-amino-acid polypeptide reads, in one-letter code: Glutamate--cysteine ligase (532 aa).

Belongs to the glutamate--cysteine ligase type 1 family. Type 1 subfamily.

It carries out the reaction L-cysteine + L-glutamate + ATP = gamma-L-glutamyl-L-cysteine + ADP + phosphate + H(+). The protein operates within sulfur metabolism; glutathione biosynthesis; glutathione from L-cysteine and L-glutamate: step 1/2. The polypeptide is Glutamate--cysteine ligase (Pseudomonas fluorescens (strain ATCC BAA-477 / NRRL B-23932 / Pf-5)).